The primary structure comprises 123 residues: Phosphoribosyl-AMP cyclohydrolase (123 aa).

A Mg(2+)-binding site is contributed by aspartate 73. A Zn(2+)-binding site is contributed by cysteine 74. Residues aspartate 75 and aspartate 77 each contribute to the Mg(2+) site. Zn(2+) is bound by residues cysteine 90 and cysteine 97.

It belongs to the PRA-CH family. As to quaternary structure, homodimer. Mg(2+) serves as cofactor. Zn(2+) is required as a cofactor.

It localises to the cytoplasm. The enzyme catalyses 1-(5-phospho-beta-D-ribosyl)-5'-AMP + H2O = 1-(5-phospho-beta-D-ribosyl)-5-[(5-phospho-beta-D-ribosylamino)methylideneamino]imidazole-4-carboxamide. Its pathway is amino-acid biosynthesis; L-histidine biosynthesis; L-histidine from 5-phospho-alpha-D-ribose 1-diphosphate: step 3/9. Catalyzes the hydrolysis of the adenine ring of phosphoribosyl-AMP. This chain is Phosphoribosyl-AMP cyclohydrolase, found in Methanoregula boonei (strain DSM 21154 / JCM 14090 / 6A8).